The sequence spans 725 residues: ATP-dependent zinc metalloprotease FtsH (725 aa).

The Cytoplasmic portion of the chain corresponds to 1 to 11 (MDKMKKPKINW). A helical membrane pass occupies residues 12-32 (LLIVIVGIIAALLITVLVLLF). Over 33–160 (SPKTQPKSFD…LFGQHIVQEN (128 aa)) the chain is Extracellular. Residues 161-181 (GFITFIKAIWFPALIAIIIFL) form a helical membrane-spanning segment. Residues 182 to 725 (GYKAQSRAAS…EEETLAEKAE (544 aa)) are Cytoplasmic-facing. 252 to 259 (GPPGTGKT) provides a ligand contact to ATP. His474 is a Zn(2+) binding site. Glu475 is an active-site residue. The Zn(2+) site is built by His478 and Asp552. Positions 680–725 (QVNESQEKDKQKNAQIKEDLSKMDKKDNLTKAKDKGEEETLAEKAE) are disordered. Over residues 684–725 (SQEKDKQKNAQIKEDLSKMDKKDNLTKAKDKGEEETLAEKAE) the composition is skewed to basic and acidic residues.

In the central section; belongs to the AAA ATPase family. The protein in the C-terminal section; belongs to the peptidase M41 family. Homohexamer. Zn(2+) serves as cofactor.

Its subcellular location is the cell membrane. Functionally, acts as a processive, ATP-dependent zinc metallopeptidase for both cytoplasmic and membrane proteins. Plays a role in the quality control of integral membrane proteins. The sequence is that of ATP-dependent zinc metalloprotease FtsH from Mycoplasmopsis pulmonis (strain UAB CTIP) (Mycoplasma pulmonis).